Consider the following 226-residue polypeptide: Uracil phosphoribosyltransferase (226 aa).

36 to 40 contacts GTP; that stretch reads KGLVK. 5-phospho-alpha-D-ribose 1-diphosphate-binding positions include arginine 86, arginine 111, and 145–153; that span reads DPMLATGST. Uracil-binding positions include isoleucine 211 and 216–218; that span reads GDA. Aspartate 217 contacts 5-phospho-alpha-D-ribose 1-diphosphate.

This sequence belongs to the UPRTase family. The cofactor is Mg(2+).

The catalysed reaction is UMP + diphosphate = 5-phospho-alpha-D-ribose 1-diphosphate + uracil. It participates in pyrimidine metabolism; UMP biosynthesis via salvage pathway; UMP from uracil: step 1/1. With respect to regulation, allosterically activated by GTP. Functionally, catalyzes the conversion of uracil and 5-phospho-alpha-D-ribose 1-diphosphate (PRPP) to UMP and diphosphate. The polypeptide is Uracil phosphoribosyltransferase (Haloquadratum walsbyi (strain DSM 16790 / HBSQ001)).